The chain runs to 54 residues: UPF0391 membrane protein msr3702 (54 aa).

2 helical membrane-spanning segments follow: residues 4-24 (WALVFLVVAIIAGALGFGGIA) and 30-50 (IAQILFFIFLAFLVISLLAGL).

This sequence belongs to the UPF0391 family.

Its subcellular location is the cell membrane. The protein is UPF0391 membrane protein msr3702 of Mesorhizobium japonicum (strain LMG 29417 / CECT 9101 / MAFF 303099) (Mesorhizobium loti (strain MAFF 303099)).